A 257-amino-acid polypeptide reads, in one-letter code: DKKEPDMFLLSECKAPEENEKINLGCLVIGSQPLKISWEPKKSSIVEHVFPSEMRNGNYTMVLQVTVLASELNLNHTCTINKPKRKEKPFKFPESWDSQSSKRVTPTLQAKNHSTEATKAITTKKDIEGAMAPSNLTVNILTTSTHPEMSSWLLCEVSGFFPENIHLMWLGVHSKMKSTNFVTANPTAQPGGTFQTWSVLRLPVALSSSLDTYTCVVEHEASKTKLNASKSLAISGCYHLLPESDGPSRRPDGPALA.

The 101-residue stretch at 5-105 (PDMFLLSECK…WDSQSSKRVT (101 aa)) folds into the Ig-like 1 domain. Cys26 and Cys78 are joined by a disulfide. N-linked (GlcNAc...) asparagine glycans are attached at residues Asn58 and Asn75. Residues 89-111 (PFKFPESWDSQSSKRVTPTLQAK) form a disordered region. Over residues 96-111 (WDSQSSKRVTPTLQAK) the composition is skewed to polar residues. Residues Asn112, Asn135, and Asn227 are each glycosylated (N-linked (GlcNAc...) asparagine). The Ig-like 2 domain maps to 133-233 (PSNLTVNILT…TKLNASKSLA (101 aa)).

As to expression, cell lines producing IgD contain several mRNA species for Ig delta chains. In plasmacytomas, the secreted form is the major component, and the membrane-bound form is a minor component. In spleen, however, the membrane-bound form is the major component. These two forms differ in their C-terminal segments.

It is found in the secreted. This is Ig delta chain C region secreted form from Mus musculus (Mouse).